Here is a 217-residue protein sequence, read N- to C-terminus: Pyrophosphatase PpaX (217 aa).

Residue D11 is the Nucleophile of the active site.

Belongs to the HAD-like hydrolase superfamily. PpaX family. Mg(2+) serves as cofactor.

It carries out the reaction diphosphate + H2O = 2 phosphate + H(+). Its function is as follows. Hydrolyzes pyrophosphate formed during P-Ser-HPr dephosphorylation by HPrK/P. Might play a role in controlling the intracellular pyrophosphate pool. The sequence is that of Pyrophosphatase PpaX from Listeria monocytogenes serotype 4a (strain HCC23).